Here is a 417-residue protein sequence, read N- to C-terminus: MNILYYDCFSGISGDMNLAAMIDLGVSPDFLITELAKLGMEDEFSLKISQDSRKGIFGTRVDVELAHQHEHHHDHGHHHHGHGHHHDHTHDHHHHHEHRNLKDIEELINSSDLNDKVKATSLAIFKRVAKAEAKIHGSTIYEVHFHEVGATDSIVDIVGAAICFHELEIDQVWCSSIELGGGFVNCAHGKMPVPAPATSEILAGLPTTQGAVQQETTTPTGAAILAEFINNFSDSPRMTVLKTAYGIGHRDNEIPNVLRVQLANIEQQVSSLPTVPSRLLQCNIDDMTGEMLGAALDQLMEDGAMDVHFTSIVMKKNRPATTLSLLCSAEDEDKFKRLIFKHTSTLGIKSIAIEKTVLDISFDKLETPLGTVTMKNAILDGEVIRSKPELEDCRALAKQHGIPLSEVYLQIGKVREI.

The segment at 69-99 (HEHHHDHGHHHHGHGHHHDHTHDHHHHHEHR) is disordered. Positions 74-99 (DHGHHHHGHGHHHDHTHDHHHHHEHR) are enriched in basic residues.

Belongs to the LarC family.

The polypeptide is Putative nickel insertion protein (Maridesulfovibrio salexigens (strain ATCC 14822 / DSM 2638 / NCIMB 8403 / VKM B-1763) (Desulfovibrio salexigens)).